The following is a 501-amino-acid chain: Pyruvate kinase (501 aa).

Arg-50 lines the substrate pocket. Positions 52, 54, 85, and 86 each coordinate K(+). Position 52–55 (52–55 (NFSH)) interacts with ATP. 2 residues coordinate ATP: Arg-92 and Lys-178. Glu-243 is a Mg(2+) binding site. Substrate is bound by residues Gly-266, Asp-267, and Thr-299. Position 267 (Asp-267) interacts with Mg(2+).

The protein belongs to the pyruvate kinase family. In terms of assembly, homotetramer. Mg(2+) is required as a cofactor. It depends on K(+) as a cofactor.

It carries out the reaction pyruvate + ATP = phosphoenolpyruvate + ADP + H(+). Its pathway is carbohydrate degradation; glycolysis; pyruvate from D-glyceraldehyde 3-phosphate: step 5/5. The sequence is that of Pyruvate kinase (PYK1) from Lachancea kluyveri (strain ATCC 58438 / CBS 3082 / BCRC 21498 / NBRC 1685 / JCM 7257 / NCYC 543 / NRRL Y-12651) (Yeast).